A 321-amino-acid polypeptide reads, in one-letter code: MEWTQALIPIVSSCAMTIAAMPLFIGYFQMKKQGQAIREEGPKWHNVKAGTPTMGGLVFLVAAILTGIWVGRPWQNQSTPTLFILLFVLALYGVIGFLDDFIKIFKKRNMGLNSKQKLLGQIIGGIIFYLVYRSEGYPGTLNFFGIELPLGLFYGVFAIFWLVGFSNAVNLTDGIDGLVAGLGTISFATYGIIAWHQQQYDVLVICLSVLGGLLGFFAYNRKPAKIFMGDVGSLALGGLLAAISIMLNQEWTLLLVGLIYVMETASVMLQVTSFKLTGKRIFKMSPIHHHFGMCGWSEWKIDIIFWLVSIVTSLITLWFIW.

10 helical membrane passes run 6 to 26 (ALIP…LFIG), 50 to 70 (GTPT…GIWV), 82 to 102 (LFIL…DDFI), 118 to 138 (LLGQ…EGYP), 143 to 163 (FFGI…FWLV), 175 to 195 (IDGL…IIAW), 200 to 220 (YDVL…FAYN), 226 to 246 (IFMG…ISIM), 251 to 271 (WTLL…MLQV), and 301 to 321 (IDII…WFIW).

It belongs to the glycosyltransferase 4 family. MraY subfamily. The cofactor is Mg(2+).

It localises to the cell membrane. It catalyses the reaction UDP-N-acetyl-alpha-D-muramoyl-L-alanyl-gamma-D-glutamyl-L-lysyl-D-alanyl-D-alanine + di-trans,octa-cis-undecaprenyl phosphate = Mur2Ac(oyl-L-Ala-gamma-D-Glu-L-Lys-D-Ala-D-Ala)-di-trans,octa-cis-undecaprenyl diphosphate + UMP. The protein operates within cell wall biogenesis; peptidoglycan biosynthesis. Its function is as follows. Catalyzes the initial step of the lipid cycle reactions in the biosynthesis of the cell wall peptidoglycan: transfers peptidoglycan precursor phospho-MurNAc-pentapeptide from UDP-MurNAc-pentapeptide onto the lipid carrier undecaprenyl phosphate, yielding undecaprenyl-pyrophosphoryl-MurNAc-pentapeptide, known as lipid I. This Enterococcus hirae protein is Phospho-N-acetylmuramoyl-pentapeptide-transferase.